The primary structure comprises 324 residues: MASEALHQVGDGEEAVLKKENFNMMNALDQLPKPFSNPKSMNRTVTTKGLPLASKGNLVNFLEDDTINLLKPLPVEDSDCSSDETSISAFSSTLLNPIKLAVTQPNSSFFAGMLEGELNKLSFSPMAKNAENEDLALGPCPCPSKSQMATRGLLDLDNPELETETSSTHSESSVVVDLPDTPFIFEHTVNNSTAVISWTYALGKQPVSFYQLLLQEVAKTQENELPEAKNRPWIFNKILGTTVKLMELKPNTCYCLSVRAANTAGVGKWCKPYKFATLATDFSSFPENYPIQITVRRKEPRQKIVSIGPEEMRRLEDLEYLFPC.

The 102-residue stretch at 179-280 (PDTPFIFEHT…KPYKFATLAT (102 aa)) folds into the Fibronectin type-III domain.

The sequence is that of Fibronectin type III domain-containing protein 8 (FNDC8) from Homo sapiens (Human).